Reading from the N-terminus, the 447-residue chain is Eukaryotic translation initiation factor 3 subunit E (447 aa).

One can recognise a PCI domain in the interval 253 to 421 (LELFFNAGYI…GTVVMNHPPS (169 aa)).

This sequence belongs to the eIF-3 subunit E family. Component of the eukaryotic translation initiation factor 3 (eIF-3) complex.

It is found in the cytoplasm. Component of the eukaryotic translation initiation factor 3 (eIF-3) complex, which is involved in protein synthesis of a specialized repertoire of mRNAs and, together with other initiation factors, stimulates binding of mRNA and methionyl-tRNAi to the 40S ribosome. The eIF-3 complex specifically targets and initiates translation of a subset of mRNAs involved in cell proliferation. In Chaetomium globosum (strain ATCC 6205 / CBS 148.51 / DSM 1962 / NBRC 6347 / NRRL 1970) (Soil fungus), this protein is Eukaryotic translation initiation factor 3 subunit E.